A 322-amino-acid chain; its full sequence is HPr kinase/phosphorylase (322 aa).

Residues His-142 and Lys-163 contribute to the active site. 157–164 (GASGVGKS) provides a ligand contact to ATP. A Mg(2+)-binding site is contributed by Ser-164. Asp-181 functions as the Proton acceptor; for phosphorylation activity. Proton donor; for dephosphorylation activity in the catalytic mechanism. The interval 205–214 (MEIRGIGIID) is important for the catalytic mechanism of both phosphorylation and dephosphorylation. Glu-206 is a Mg(2+) binding site. The active site involves Arg-247. Residues 268–273 (PVKVGR) are important for the catalytic mechanism of dephosphorylation.

This sequence belongs to the HPrK/P family. In terms of assembly, homohexamer. Mg(2+) is required as a cofactor.

The catalysed reaction is [HPr protein]-L-serine + ATP = [HPr protein]-O-phospho-L-serine + ADP + H(+). The enzyme catalyses [HPr protein]-O-phospho-L-serine + phosphate + H(+) = [HPr protein]-L-serine + diphosphate. Catalyzes the ATP- as well as the pyrophosphate-dependent phosphorylation of a specific serine residue in HPr, a phosphocarrier protein of the phosphoenolpyruvate-dependent sugar phosphotransferase system (PTS). HprK/P also catalyzes the pyrophosphate-producing, inorganic phosphate-dependent dephosphorylation (phosphorolysis) of seryl-phosphorylated HPr (P-Ser-HPr). The two antagonistic activities of HprK/P are regulated by several intracellular metabolites, which change their concentration in response to the absence or presence of rapidly metabolisable carbon sources (glucose, fructose, etc.) in the growth medium. Therefore, by controlling the phosphorylation state of HPr, HPrK/P is a sensor enzyme that plays a major role in the regulation of carbon metabolism and sugar transport: it mediates carbon catabolite repression (CCR), and regulates PTS-catalyzed carbohydrate uptake and inducer exclusion. This chain is HPr kinase/phosphorylase, found in Lactobacillus acidophilus (strain ATCC 700396 / NCK56 / N2 / NCFM).